We begin with the raw amino-acid sequence, 115 residues long: NADH-ubiquinone oxidoreductase chain 3 (115 aa).

3 consecutive transmembrane segments (helical) span residues 3-23, 55-75, and 84-104; these read LMLALLTNFTLATLLVIIAFW, FFLVAITFLLFDLEIALLLPL, and LNTMLTMALFLIILLAVSLAY.

It belongs to the complex I subunit 3 family. As to quaternary structure, core subunit of respiratory chain NADH dehydrogenase (Complex I) which is composed of 45 different subunits. Interacts with TMEM186. Interacts with TMEM242.

It localises to the mitochondrion inner membrane. It carries out the reaction a ubiquinone + NADH + 5 H(+)(in) = a ubiquinol + NAD(+) + 4 H(+)(out). Its function is as follows. Core subunit of the mitochondrial membrane respiratory chain NADH dehydrogenase (Complex I) which catalyzes electron transfer from NADH through the respiratory chain, using ubiquinone as an electron acceptor. Essential for the catalytic activity of complex I. This Bos indicus (Zebu) protein is NADH-ubiquinone oxidoreductase chain 3.